The sequence spans 183 residues: Ribosome maturation factor RimM (183 aa).

The region spanning 104 to 183 (EGDYYWKDLM…TIEVDWDPGF (80 aa)) is the PRC barrel domain.

This sequence belongs to the RimM family. Binds ribosomal protein uS19.

Its subcellular location is the cytoplasm. An accessory protein needed during the final step in the assembly of 30S ribosomal subunit, possibly for assembly of the head region. Essential for efficient processing of 16S rRNA. May be needed both before and after RbfA during the maturation of 16S rRNA. It has affinity for free ribosomal 30S subunits but not for 70S ribosomes. This is Ribosome maturation factor RimM from Salmonella choleraesuis (strain SC-B67).